Reading from the N-terminus, the 1228-residue chain is DNA repair protein rad5 (1228 aa).

Disordered regions lie at residues 1-96, 194-242, 280-302, and 445-474; these read MDRH…GTLT, PPVR…VLPS, QPPTVARKGQTKPGTPQSIPRVS, and KAMDKAKAGDHNTNGLASPPEEAEEGQELE. Residues 34–43 are compositionally biased toward low complexity; the sequence is PSSSPQFSAP. Acidic residues predominate over residues 70-83; that stretch reads HNDDDDDDDDDDDE. A compositionally biased stretch (polar residues) spans 211-237; that stretch reads PKKSSTSQARSRSHAQAQPQPQSNTPT. The segment covering 445–454 has biased composition (basic and acidic residues); it reads KAMDKAKAGD. A compositionally biased stretch (acidic residues) spans 465-474; that stretch reads EEAEEGQELE. One can recognise a Helicase ATP-binding domain in the interval 574 to 784; the sequence is PKQEQHCLGG…FSLVRFLRVE (211 aa). 587–594 is an ATP binding site; that stretch reads DEMGLGKT. The DEAH box motif lies at 735-738; sequence DEAH. Residues 967-1012 form an RING-type zinc finger; that stretch reads CPICAEEPMIDQAVTGCWHSACKKCLLDYIKHQTDRNEVPRCFQCR. Residues 1060-1216 form the Helicase C-terminal domain; sequence ALISHLRTLR…MMSDEEKKMQ (157 aa).

The protein belongs to the SNF2/RAD54 helicase family.

The protein localises to the cytoplasm. It localises to the nucleus. Probable helicase, member of the UBC2/RAD6 epistasis group. Functions with DNA repair protein uvs-2/rad18 in error-free postreplication DNA repair. Involved in the maintenance of wild-type rates of instability of simple repetitive sequences such as poly(GT) repeats. Seems to be involved in maintaining a balance which acts in favor of error-prone non-homologous joining during DNA double-strand breaks repairs. In Neurospora crassa (strain ATCC 24698 / 74-OR23-1A / CBS 708.71 / DSM 1257 / FGSC 987), this protein is DNA repair protein rad5 (mus-41).